A 351-amino-acid polypeptide reads, in one-letter code: Putative F-box protein At4g09790 (351 aa).

The F-box domain maps to 1–51; sequence MTTICDLPRDLVARILSRVPLTSMRRVRFTCKRWNTISKDPSFAKTHFGKA.

In Arabidopsis thaliana (Mouse-ear cress), this protein is Putative F-box protein At4g09790.